We begin with the raw amino-acid sequence, 114 residues long: TYRO protein tyrosine kinase-binding protein (114 aa).

An N-terminal signal peptide occupies residues methionine 1 to glycine 21. Residues leucine 22 to proline 42 lie on the Extracellular side of the membrane. The helical transmembrane segment at glycine 43–valine 63 threads the bilayer. Aspartate 52 contacts Ca(2+). Topologically, residues tyrosine 64–arginine 114 are cytoplasmic. The disordered stretch occupies residues glutamine 74 to asparagine 107. One can recognise an ITAM domain in the interval arginine 81–glutamine 109. Phosphotyrosine is present on residues tyrosine 92 and tyrosine 103.

Belongs to the TYROBP family. As to quaternary structure, homodimer; disulfide-linked. Homotrimer; disulfide-linked. Homotetramer; disulfide-linked. Homotrimers and homotetramers form when low levels of partner receptors are available and are competitive with assembly with interacting receptors. They may represent alternative oligomerization states or may be intermediates in the receptor assembly process. Binding of a metal cation aids in homooligomerization through coordination of the metal ion by the subunits of the oligomer. Interacts with TREM1. Interacts with TREM2. Interacts with TREM3. Interacts with CLECSF5. Interacts with CD300LB and CD300C2. Interacts with CD300E. Interacts (via ITAM domain) with SYK (via SH2 domains); activates SYK mediating neutrophil and macrophage integrin-mediated activation. Interacts (via transmembrane domain) with KLRK1 isoform 2 (via transmembrane domain); the interaction is required for KLRK1 NK cell surface expression and NK cell-mediated cytotoxicity. Interacts with KLRC2. Interacts with CD300H. Interacts with KLRD1. Interacts with KLRA4 and KLRA8. Post-translationally, tyrosine phosphorylated. Following ligand binding by associated receptors, tyrosine phosphorylated in the ITAM domain which leads to activation of additional tyrosine kinases and subsequent cell activation. Expressed on microglia (at protein level). Expressed on oligodendrocytes (at protein level). Expressed on macrophages and osteoclasts. Expressed on dendritic cells in liver, spleen, kidney and lung with highest levels in liver dendritic cells.

The protein resides in the cell membrane. Its function is as follows. Adapter protein which non-covalently associates with activating receptors found on the surface of a variety of immune cells to mediate signaling and cell activation following ligand binding by the receptors. TYROBP is tyrosine-phosphorylated in the ITAM domain following ligand binding by the associated receptors which leads to activation of additional tyrosine kinases and subsequent cell activation. Also has an inhibitory role in some cells. Non-covalently associates with activating receptors of the CD300 family to mediate cell activation. Also mediates cell activation through association with activating receptors of the CD200R family. Required for neutrophil activation mediated by integrin. Required for the activation of myeloid cells mediated by the CLEC5A/MDL1 receptor. Associates with natural killer (NK) cell receptors such as the KLRD1/KLRC2 heterodimer to mediate NK cell activation. Also associates non-covalently with the NK cell receptors KLRA4/LY49D and KLRA8/LY49H which leads to NK cell activation. Associates with TREM1 to mediate activation of neutrophils and monocytes. Associates with TREM2 on monocyte-derived dendritic cells to mediate up-regulation of chemokine receptor CCR7 and dendritic cell maturation and survival. Association with TREM2 mediates cytokine-induced formation of multinucleated giant cells which are formed by the fusion of macrophages. Stabilizes the TREM2 C-terminal fragment (TREM2-CTF) which is produced by TREM2 ectodomain shedding. In microglia, required with TREM2 for phagocytosis of apoptotic neurons. Required with ITGAM/CD11B in microglia to control production of microglial superoxide ions which promote the neuronal apoptosis that occurs during brain development. Promotes pro-inflammatory responses in microglia following nerve injury which accelerates degeneration of injured neurons. Positively regulates the expression of the IRAK3/IRAK-M kinase and IL10 production by liver dendritic cells and inhibits their T cell allostimulatory ability. Negatively regulates B cell proliferation. Required for CSF1-mediated osteoclast cytoskeletal organization. Positively regulates multinucleation during osteoclast development. This is TYRO protein tyrosine kinase-binding protein from Mus musculus (Mouse).